An 81-amino-acid chain; its full sequence is Photosystem I iron-sulfur center (81 aa).

2 consecutive 4Fe-4S ferredoxin-type domains span residues 2-31 (SHTVKIYDTCIGCTQCVRACPTDVLEMVPW) and 39-68 (VASSPRTEDCVGCKRCETACPTDFLSIRVY). Residues cysteine 11, cysteine 14, cysteine 17, cysteine 21, cysteine 48, cysteine 51, cysteine 54, and cysteine 58 each contribute to the [4Fe-4S] cluster site.

As to quaternary structure, the cyanobacterial PSI reaction center is composed of one copy each of PsaA,B,C,D,E,F,I,J,K,L,M and X, and forms trimeric complexes. [4Fe-4S] cluster is required as a cofactor.

The protein localises to the cellular thylakoid membrane. It carries out the reaction reduced [plastocyanin] + hnu + oxidized [2Fe-2S]-[ferredoxin] = oxidized [plastocyanin] + reduced [2Fe-2S]-[ferredoxin]. Apoprotein for the two 4Fe-4S centers FA and FB of photosystem I (PSI); essential for photochemical activity. FB is the terminal electron acceptor of PSI, donating electrons to ferredoxin. The C-terminus interacts with PsaA/B/D and helps assemble the protein into the PSI complex. Required for binding of PsaD and PsaE to PSI. PSI is a plastocyanin/cytochrome c6-ferredoxin oxidoreductase, converting photonic excitation into a charge separation, which transfers an electron from the donor P700 chlorophyll pair to the spectroscopically characterized acceptors A0, A1, FX, FA and FB in turn. This Trichormus variabilis (strain ATCC 29413 / PCC 7937) (Anabaena variabilis) protein is Photosystem I iron-sulfur center.